The following is a 343-amino-acid chain: Sulfate/thiosulfate import ATP-binding protein CysA (343 aa).

Residues 3-233 (ILIENISKTF…PATPFVMGFM (231 aa)) enclose the ABC transporter domain. 35–42 (GPSGSGKS) is an ATP binding site.

This sequence belongs to the ABC transporter superfamily. Sulfate/tungstate importer (TC 3.A.1.6) family.

The protein localises to the plastid. It is found in the chloroplast. It catalyses the reaction sulfate(out) + ATP + H2O = sulfate(in) + ADP + phosphate + H(+). The enzyme catalyses thiosulfate(out) + ATP + H2O = thiosulfate(in) + ADP + phosphate + H(+). Its function is as follows. Part of the ABC transporter complex involved in sulfate/thiosulfate import. Responsible for energy coupling to the transport system. This chain is Sulfate/thiosulfate import ATP-binding protein CysA, found in Nephroselmis olivacea (Green alga).